We begin with the raw amino-acid sequence, 404 residues long: S-adenosylmethionine synthase (404 aa).

Position 17 (His17) interacts with ATP. Residue Asp19 coordinates Mg(2+). Position 45 (Glu45) interacts with K(+). The L-methionine site is built by Glu58 and Gln101. Residues 101-111 (QSADINRGVDR) form a flexible loop region. ATP-binding positions include 172-174 (DAK), 245-246 (RF), Asp254, 260-261 (RK), Ala277, and Lys281. Asp254 is an L-methionine binding site. Lys285 contacts L-methionine.

It belongs to the AdoMet synthase family. As to quaternary structure, homotetramer; dimer of dimers. The cofactor is Mg(2+). Requires K(+) as cofactor.

It localises to the cytoplasm. It carries out the reaction L-methionine + ATP + H2O = S-adenosyl-L-methionine + phosphate + diphosphate. Its pathway is amino-acid biosynthesis; S-adenosyl-L-methionine biosynthesis; S-adenosyl-L-methionine from L-methionine: step 1/1. Functionally, catalyzes the formation of S-adenosylmethionine (AdoMet) from methionine and ATP. The overall synthetic reaction is composed of two sequential steps, AdoMet formation and the subsequent tripolyphosphate hydrolysis which occurs prior to release of AdoMet from the enzyme. This is S-adenosylmethionine synthase from Chlorobium luteolum (strain DSM 273 / BCRC 81028 / 2530) (Pelodictyon luteolum).